The following is a 346-amino-acid chain: Ribosomal RNA small subunit methyltransferase H (346 aa).

S-adenosyl-L-methionine-binding positions include 47–49 (GGY), aspartate 65, phenylalanine 92, aspartate 113, and glutamine 120. The tract at residues 294–346 (AVEPGSDEVAGNPRARSAKLRAAERTDAPAHPDGDLAGLLPADLSQRRGRRRS) is disordered. Residues 314 to 327 (RAAERTDAPAHPDG) are compositionally biased toward basic and acidic residues. Over residues 328 to 337 (DLAGLLPADL) the composition is skewed to low complexity.

It belongs to the methyltransferase superfamily. RsmH family.

It is found in the cytoplasm. The catalysed reaction is cytidine(1402) in 16S rRNA + S-adenosyl-L-methionine = N(4)-methylcytidine(1402) in 16S rRNA + S-adenosyl-L-homocysteine + H(+). In terms of biological role, specifically methylates the N4 position of cytidine in position 1402 (C1402) of 16S rRNA. The protein is Ribosomal RNA small subunit methyltransferase H of Azorhizobium caulinodans (strain ATCC 43989 / DSM 5975 / JCM 20966 / LMG 6465 / NBRC 14845 / NCIMB 13405 / ORS 571).